Reading from the N-terminus, the 782-residue chain is Endonuclease MutS2 (782 aa).

336 to 343 provides a ligand contact to ATP; sequence GPNTGGKT. A Smr domain is found at 707–782; it reads LDLRGYRYED…GFGVTVATLK (76 aa).

It belongs to the DNA mismatch repair MutS family. MutS2 subfamily. Homodimer. Binds to stalled ribosomes, contacting rRNA.

In terms of biological role, endonuclease that is involved in the suppression of homologous recombination and thus may have a key role in the control of bacterial genetic diversity. Its function is as follows. Acts as a ribosome collision sensor, splitting the ribosome into its 2 subunits. Detects stalled/collided 70S ribosomes which it binds and splits by an ATP-hydrolysis driven conformational change. Acts upstream of the ribosome quality control system (RQC), a ribosome-associated complex that mediates the extraction of incompletely synthesized nascent chains from stalled ribosomes and their subsequent degradation. Probably generates substrates for RQC. The sequence is that of Endonuclease MutS2 from Staphylococcus aureus (strain MRSA252).